A 180-amino-acid chain; its full sequence is Centromere protein M (180 aa).

In terms of assembly, component of the CENPA-NAC complex, at least composed of CENPA, CENPC, CENPH, CENPM, CENPN, CENPT and CENPU. The CENPA-NAC complex interacts with the CENPA-CAD complex, composed of CENPI, CENPK, CENPL, CENPO, CENPP, CENPQ, CENPR and CENPS. In terms of tissue distribution, isoform 3 is highly expressed in spleen, and intermediately in heart, prostate and ovary. Isoform 3 is highly expressed in resting CD19 B-cells and B-lineage chronic lymphocytic leukemia (B-CLL) cells and weakly expressed in activated B-cells. Isoform 1 is selectively expressed in activated CD19 cells and weakly in resting CD19 B-cells.

It is found in the nucleus. Its subcellular location is the cytoplasm. The protein localises to the chromosome. It localises to the centromere. The protein resides in the kinetochore. Functionally, component of the CENPA-NAC (nucleosome-associated) complex, a complex that plays a central role in assembly of kinetochore proteins, mitotic progression and chromosome segregation. The CENPA-NAC complex recruits the CENPA-CAD (nucleosome distal) complex and may be involved in incorporation of newly synthesized CENPA into centromeres. The protein is Centromere protein M (CENPM) of Homo sapiens (Human).